A 383-amino-acid polypeptide reads, in one-letter code: MGKPRPHKKKASKTREKSVLSAGGSISKRKMNEDPRKLLEQATILLQTGQADAALSIAQQALEIATSNSPAQLSSLNTIAEIYVELGEIDLARKHFLQAVELDPTGSIPESEGGGAEKFLWLAQLSELGGKDSVQWFEKGVGALRGIFRRSPLFFIAFSRASYQADIFRWEEDAESRCENLITEALLVQPSSPEVLQTLASIRISQLREDDARAALSRSLELWKDLPPEDPHVPDFPTRISLSRLLMEVSMLLEALEVLERLILEDDQSVEAWYLGGWCLQLLAEIGEAPRDPEAESNETPESKRHASLVASREWLKQSLMLYDLVQYEDERLKEHALELVEAMNKELGEEMEDDSNVEDGEGEGEEEWEGIESDSDHEMADS.

Basic residues predominate over residues 1 to 12 (MGKPRPHKKKAS). The disordered stretch occupies residues 1 to 33 (MGKPRPHKKKASKTREKSVLSAGGSISKRKMNE). 4 TPR repeats span residues 35 to 68 (PRKL…ATSN), 73 to 106 (LSSL…DPTG), 116 to 147 (AEKF…LRGI), and 193 to 226 (PEVL…WKDL). The segment at 345–383 (NKELGEEMEDDSNVEDGEGEGEEEWEGIESDSDHEMADS) is disordered. Positions 350–374 (EEMEDDSNVEDGEGEGEEEWEGIES) are enriched in acidic residues.

The protein belongs to the ACL4 family.

The protein localises to the cytoplasm. The protein resides in the nucleus. In terms of biological role, acts as a chaperone for the L4 ribosomal subunit, required for hierarchical ribosome assembly. Shields ribosomal protein L4 until timely release and insertion into the pre-ribosome is possible, once ribosomal protein L18 is present. The chain is Probable assembly chaperone of rpl4 from Emericella nidulans (strain FGSC A4 / ATCC 38163 / CBS 112.46 / NRRL 194 / M139) (Aspergillus nidulans).